The primary structure comprises 141 residues: Hemoglobin subunit alpha-A (141 aa).

One can recognise a Globin domain in the interval 1–141; it reads VLSGTDKTNV…VGAVLTAKYR (141 aa). His-58 provides a ligand contact to O2. Position 87 (His-87) interacts with heme b.

This sequence belongs to the globin family. In terms of assembly, heterotetramer of two alpha chains and two beta chains. In terms of tissue distribution, red blood cells.

Functionally, involved in oxygen transport from the lung to the various peripheral tissues. The sequence is that of Hemoglobin subunit alpha-A (HBAA) from Struthio camelus (Common ostrich).